The sequence spans 132 residues: Large ribosomal subunit protein bL12 (132 aa).

The protein belongs to the bacterial ribosomal protein bL12 family. Homodimer. Part of the ribosomal stalk of the 50S ribosomal subunit. Forms a multimeric L10(L12)X complex, where L10 forms an elongated spine to which 2 to 4 L12 dimers bind in a sequential fashion. Binds GTP-bound translation factors.

Functionally, forms part of the ribosomal stalk which helps the ribosome interact with GTP-bound translation factors. Is thus essential for accurate translation. In Chloroflexus aurantiacus (strain ATCC 29366 / DSM 635 / J-10-fl), this protein is Large ribosomal subunit protein bL12.